Consider the following 306-residue polypeptide: MEKGNQSTVNKFFLSGLTEQPELQLPLFLLFLGIYLLTVLGNLGMIILILLSSYLHTPMYFFLSSLSFIDFCQSTVITPKMLVKFVREKNEISYPECITQLCFFVIFAVSESYMLAAMAYDRYVAICSPLLYSSIMSQHKCLSLVLGVYILGIVCASAHVGCIFRIDFCKSDLINHYFCDLISILNLSCSNIFVNDLVILIFSLINTIFPTLTILSSYAFIIISILRIKSTEGRSKAFSTCSSHISAVAIFYISAGFTYLNPSSSHSMDEGKVSSIFYTIIVPMLNPLIYSLRNKDVKIALKKMIE.

At 1 to 28 (MEKGNQSTVNKFFLSGLTEQPELQLPLF) the chain is on the extracellular side. Asn-5 carries N-linked (GlcNAc...) asparagine glycosylation. The chain crosses the membrane as a helical span at residues 29 to 49 (LLFLGIYLLTVLGNLGMIILI). Over 50-56 (LLSSYLH) the chain is Cytoplasmic. The chain crosses the membrane as a helical span at residues 57 to 77 (TPMYFFLSSLSFIDFCQSTVI). At 78 to 97 (TPKMLVKFVREKNEISYPEC) the chain is on the extracellular side. Residues 98 to 118 (ITQLCFFVIFAVSESYMLAAM) traverse the membrane as a helical segment. The Cytoplasmic portion of the chain corresponds to 119–143 (AYDRYVAICSPLLYSSIMSQHKCLS). A helical membrane pass occupies residues 144 to 164 (LVLGVYILGIVCASAHVGCIF). The Extracellular portion of the chain corresponds to 165–196 (RIDFCKSDLINHYFCDLISILNLSCSNIFVND). A helical transmembrane segment spans residues 197 to 217 (LVILIFSLINTIFPTLTILSS). Topologically, residues 218 to 236 (YAFIIISILRIKSTEGRSK) are cytoplasmic. The chain crosses the membrane as a helical span at residues 237-257 (AFSTCSSHISAVAIFYISAGF). The Extracellular segment spans residues 258–271 (TYLNPSSSHSMDEG). The helical transmembrane segment at 272 to 292 (KVSSIFYTIIVPMLNPLIYSL) threads the bilayer. Topologically, residues 293 to 306 (RNKDVKIALKKMIE) are cytoplasmic.

The protein belongs to the G-protein coupled receptor 1 family.

It is found in the cell membrane. Odorant receptor. This is Olfactory receptor 8G17 from Mus musculus (Mouse).